Consider the following 246-residue polypeptide: Phosphomannomutase 2 (246 aa).

N-acetylalanine is present on alanine 2. Aspartate 12 (nucleophile) is an active-site residue. Residues aspartate 12 and aspartate 14 each coordinate Mg(2+). The Proton donor/acceptor role is filled by aspartate 14. Residues arginine 21, arginine 123, arginine 134, and arginine 141 each contribute to the alpha-D-mannose 1-phosphate site. Residue lysine 149 is modified to N6-acetyllysine. The alpha-D-mannose 1-phosphate site is built by serine 179 and aspartate 181. Aspartate 209, phenylalanine 221, aspartate 223, and threonine 226 together coordinate Mg(2+).

Belongs to the eukaryotic PMM family. Homodimer.

It is found in the cytoplasm. The enzyme catalyses alpha-D-mannose 1-phosphate = D-mannose 6-phosphate. It functions in the pathway nucleotide-sugar biosynthesis; GDP-alpha-D-mannose biosynthesis; alpha-D-mannose 1-phosphate from D-fructose 6-phosphate: step 2/2. In terms of biological role, involved in the synthesis of the GDP-mannose and dolichol-phosphate-mannose required for a number of critical mannosyl transfer reactions. The protein is Phosphomannomutase 2 (PMM2) of Homo sapiens (Human).